The chain runs to 66 residues: Small vasohibin-binding protein (66 aa).

Over residues 1-23 (MDPPARKEKPKVKEPVSRIEKAK) the composition is skewed to basic and acidic residues. A disordered region spans residues 1-32 (MDPPARKEKPKVKEPVSRIEKAKQKSAQQELK). A coiled-coil region spans residues 5–52 (ARKEKPKVKEPVSRIEKAKQKSAQQELKQRQRAEIYALNRVMTELEQQ).

This sequence belongs to the SVBP family. As to quaternary structure, interacts with VASH1 and VASH2.

The protein localises to the cytoplasm. It is found in the secreted. It localises to the cytoskeleton. In terms of biological role, enhances the tyrosine carboxypeptidase activity of VASH1 and VASH2, thereby promoting the removal of the C-terminal tyrosine residue of alpha-tubulin. Also required to enhance the solubility and secretion of VASH1 and VASH2. Plays a role in axon and excitatory synapse formation. This chain is Small vasohibin-binding protein, found in Bos taurus (Bovine).